The following is a 202-amino-acid chain: Inosine triphosphate pyrophosphatase (202 aa).

8–13 (TGNANK) serves as a coordination point for ITP. Glu55 lines the Mg(2+) pocket. ITP-binding positions include Lys67, 83 to 84 (DT), Lys100, 159 to 162 (FGWD), Lys182, and 187 to 188 (HR).

The protein belongs to the HAM1 NTPase family. As to quaternary structure, homodimer. Requires Mg(2+) as cofactor. The cofactor is Mn(2+).

It localises to the cytoplasm. Its subcellular location is the nucleus. It carries out the reaction ITP + H2O = IMP + diphosphate + H(+). It catalyses the reaction dITP + H2O = dIMP + diphosphate + H(+). The enzyme catalyses XTP + H2O = XMP + diphosphate + H(+). Functionally, pyrophosphatase that hydrolyzes non-canonical purine nucleotides such as inosine triphosphate (ITP), deoxyinosine triphosphate (dITP) or xanthosine 5'-triphosphate (XTP) to their respective monophosphate derivatives. The enzyme does not distinguish between the deoxy- and ribose forms. Probably excludes non-canonical purines from RNA and DNA precursor pools, thus preventing their incorporation into RNA and DNA and avoiding chromosomal lesions. This chain is Inosine triphosphate pyrophosphatase, found in Candida albicans (strain SC5314 / ATCC MYA-2876) (Yeast).